We begin with the raw amino-acid sequence, 926 residues long: Rap guanine nucleotide exchange factor 3 (926 aa).

Ser-79 bears the Phosphoserine mark. Residues 110-186 enclose the DEP domain; sequence ATYPTLIRDR…RDAQFYRFPG (77 aa). The segment at 218-242 is interaction with PDE3B; it reads TVALRKSPGQRTDEELDLIFEELVH. Residues 311–314 and 321–322 contribute to the 3',5'-cyclic AMP site; these read GQLA and RA. The interval 369–388 is disordered; the sequence is TSQGAGPSRPPTPGRNRYTV. In terms of domain architecture, N-terminal Ras-GEF spans 384 to 521; sequence NRYTVMSGTP…EQYPERRRHH (138 aa). Positions 398–422 are interaction with PDE3B; that stretch reads ELLLEAMRPDSSAHDPTETFLSDFL. Ser-531 and Ser-867 each carry phosphoserine. Residues 665–892 enclose the Ras-GEF domain; it reads SAKDLAGQLT…SRISTCSEQS (228 aa).

As to quaternary structure, interacts with PDE3B and PIK3R6; form a signaling complex that regulates phosphatidylinositol 3-kinase gamma in angiogenesis. As to expression, expressed at low levels in adult brain. Strongly expressed in parts of the neonatal brain, including the septum and the thalamus.

It localises to the cytoplasm. The protein resides in the membrane. In terms of biological role, guanine nucleotide exchange factor (GEF) for RAP1A and RAP2A small GTPases that is activated by binding cAMP. Through simultaneous binding of PDE3B to RAPGEF3 and PIK3R6 is assembled in a signaling complex in which it activates the PI3K gamma complex and which is involved in angiogenesis. Plays a role in the modulation of the cAMP-induced dynamic control of endothelial barrier function through a pathway that is independent on Rho-mediated signaling. Required for the actin rearrangement at cell-cell junctions, such as stress fibers and junctional actin. This Rattus norvegicus (Rat) protein is Rap guanine nucleotide exchange factor 3 (Rapgef3).